The sequence spans 123 residues: MALTPLLLLLLSHCTGSLSRPVLTQPPSLSASPGATARLPCTLSSDLSVGGKNMFWYQQKLGSSPRLFLYHYSDSDKQLGPGVPSRVSGSKETSSNTAFLLISGLQPEDEADYYCQVYESSAN.

An N-terminal signal peptide occupies residues 1–19 (MALTPLLLLLLSHCTGSLS). The framework-1 stretch occupies residues 20 to 44 (RPVLTQPPSLSASPGATARLPCTLS). An Ig-like domain is found at 21 to 123 (PVLTQPPSLS…YCQVYESSAN (103 aa)). An intrachain disulfide couples Cys41 to Cys115. Positions 45–53 (SDLSVGGKN) are complementarity-determining-1. The framework-2 stretch occupies residues 54–70 (MFWYQQKLGSSPRLFLY). The tract at residues 71–77 (HYSDSDK) is complementarity-determining-2. The segment at 78–115 (QLGPGVPSRVSGSKETSSNTAFLLISGLQPEDEADYYC) is framework-3. Residues 116-123 (QVYESSAN) are complementarity-determining-3.

Immunoglobulins are composed of two identical heavy chains and two identical light chains; disulfide-linked.

The protein resides in the secreted. It is found in the cell membrane. Probable non-functional open reading frame (ORF) of V region of the variable domain of immunoglobulin light chains. Non-functional ORF generally cannot participate in the synthesis of a productive immunoglobulin chain due to altered V-(D)-J or switch recombination and/or splicing site (at mRNA level) and/or conserved amino acid change (protein level). Immunoglobulins, also known as antibodies, are membrane-bound or secreted glycoproteins produced by B lymphocytes. In the recognition phase of humoral immunity, the membrane-bound immunoglobulins serve as receptors which, upon binding of a specific antigen, trigger the clonal expansion and differentiation of B lymphocytes into immunoglobulins-secreting plasma cells. Secreted immunoglobulins mediate the effector phase of humoral immunity, which results in the elimination of bound antigens. The antigen binding site is formed by the variable domain of one heavy chain, together with that of its associated light chain. Thus, each immunoglobulin has two antigen binding sites with remarkable affinity for a particular antigen. The variable domains are assembled by a process called V-(D)-J rearrangement and can then be subjected to somatic hypermutations which, after exposure to antigen and selection, allow affinity maturation for a particular antigen. The polypeptide is Probable non-functional immunoglobulin lambda variable 11-55 (Homo sapiens (Human)).